The sequence spans 119 residues: uncharacterized protein (119 aa).

Residues 63–104 adopt a coiled-coil conformation; sequence KKIKKELESNSEKRKAALQMIKEEHTAKVDRYKMIIEDLRQQ.

This is an uncharacterized protein from Bacillus subtilis (strain 168).